A 312-amino-acid polypeptide reads, in one-letter code: Olfactory receptor 1D2 (312 aa).

At Met-1–Gln-25 the chain is on the extracellular side. The N-linked (GlcNAc...) asparagine glycan is linked to Asn-5. Residues Ile-26–Ile-49 traverse the membrane as a helical segment. The Cytoplasmic segment spans residues Asn-50–Thr-57. Residues Pro-58–Pro-79 traverse the membrane as a helical segment. The Extracellular segment spans residues Lys-80 to Gln-100. An intrachain disulfide couples Cys-97 to Cys-189. A helical transmembrane segment spans residues Leu-101–Tyr-120. The Cytoplasmic segment spans residues Asp-121–Lys-139. The helical transmembrane segment at Leu-140–Ile-158 threads the bilayer. Residues His-159–His-196 lie on the Extracellular side of the membrane. Asn-195 is a glycosylation site (N-linked (GlcNAc...) asparagine). Residues Thr-197 to Val-219 traverse the membrane as a helical segment. The Cytoplasmic segment spans residues Leu-220–Lys-236. Residues Ala-237 to Tyr-259 traverse the membrane as a helical segment. The Extracellular portion of the chain corresponds to Leu-260–Ser-271. The helical transmembrane segment at Val-272–Leu-291 threads the bilayer. The Cytoplasmic portion of the chain corresponds to Arg-292–Thr-312.

This sequence belongs to the G-protein coupled receptor 1 family.

The protein localises to the cell membrane. Odorant receptor. This is Olfactory receptor 1D2 (OR1D2) from Gorilla gorilla gorilla (Western lowland gorilla).